The primary structure comprises 127 residues: Cytochrome c' (127 aa).

The residue at position 1 (glutamine 1) is a Pyrrolidone carboxylic acid. Positions 12, 13, 67, 116, 119, and 120 each coordinate heme c.

As to quaternary structure, homodimer. Post-translationally, binds 1 heme c group covalently per subunit.

The protein localises to the periplasm. Cytochrome c' is the most widely occurring bacterial c-type cytochrome. Cytochromes c' are high-spin proteins and the heme has no sixth ligand. Their exact function is not known. This chain is Cytochrome c', found in Alcaligenes xylosoxydans xylosoxydans (Achromobacter xylosoxidans).